The sequence spans 298 residues: MEEIFALIVSMILIVAVIPLFFWKRRRDARSREEVAEPPQVQPRENVARAGGGRRMRRRPAASGASSSTSNVQENGSGSEDEDEDEAGGTQARASKKKEKKRQEREAQRQAEEATRESRNTKQDWYAEMRRKKDEEREAEELKLEEEEKARQAKEEEAAALEFDKWKGEFSVDAEGTTEEVQGGNQDLLSEFVEYIKKQKCVPLEDLAAEFHLRTQECINRIASLESIGRLSGVMDDRGKYIYISMEEMNAVADYIKRQGRVSISHLASKSNQFIDLEPKVQHQLTEEISGMEEISVS.

The Lumenal segment spans residues 1–2 (ME). A helical membrane pass occupies residues 3-23 (EIFALIVSMILIVAVIPLFFW). At 24-298 (KRRRDARSRE…ISGMEEISVS (275 aa)) the chain is on the cytoplasmic side. The disordered stretch occupies residues 31-155 (SREEVAEPPQ…EEEKARQAKE (125 aa)). Positions 101 to 155 (KRQEREAQRQAEEATRESRNTKQDWYAEMRRKKDEEREAEELKLEEEEKARQAKE) are enriched in basic and acidic residues.

It belongs to the DDRGK1 family.

It localises to the endoplasmic reticulum membrane. Its function is as follows. Substrate adapter for ufmylation, the covalent attachment of the ubiquitin-like modifier UFM1 to substrate proteins. The protein is DDRGK domain-containing protein 1 of Arabidopsis thaliana (Mouse-ear cress).